The chain runs to 221 residues: Transcriptional regulatory protein QseB (221 aa).

The 115-residue stretch at 2–116 (RILLIEDDNL…EVAARLQALI (115 aa)) folds into the Response regulatory domain. At aspartate 51 the chain carries 4-aspartylphosphate. Residues 124-218 (HSVIEQAGVK…VHGVGYALGQ (95 aa)) constitute a DNA-binding region (ompR/PhoB-type).

Phosphorylated by QseC.

Its subcellular location is the cytoplasm. Member of a two-component regulatory system QseB/QseC. In Haemophilus influenzae (strain ATCC 51907 / DSM 11121 / KW20 / Rd), this protein is Transcriptional regulatory protein QseB (qseB).